Consider the following 209-residue polypeptide: MSGKKRTASSTRWMQEHFDDHYVKLAQKRGLRSRAAFKLEELQEKDQLIRPGMTVVDLGAAPGGWSQIAVKLTGDKGKVIACDILPMDPIVGVDFLQGDFREEKVLEALLTRVGADKVDVVLSDMAPNMSGSDGVDQPRAMYLVELALDMCHQVLAPNGSFAVKVFQGEGFDEYMKAVKDAFKVVKTRKPDSSRARSREVYLVATGYKL.

Residues Gly-63, Trp-65, Asp-83, Asp-99, and Asp-124 each contribute to the S-adenosyl-L-methionine site. Lys-164 serves as the catalytic Proton acceptor.

Belongs to the class I-like SAM-binding methyltransferase superfamily. RNA methyltransferase RlmE family.

It localises to the cytoplasm. It catalyses the reaction uridine(2552) in 23S rRNA + S-adenosyl-L-methionine = 2'-O-methyluridine(2552) in 23S rRNA + S-adenosyl-L-homocysteine + H(+). In terms of biological role, specifically methylates the uridine in position 2552 of 23S rRNA at the 2'-O position of the ribose in the fully assembled 50S ribosomal subunit. In Shewanella sp. (strain ANA-3), this protein is Ribosomal RNA large subunit methyltransferase E.